The chain runs to 278 residues: HTH-type transcriptional activator RhaS (278 aa).

One can recognise an HTH araC/xylS-type domain in the interval 174 to 272 (NQLMAWLEDH…NWSPRDIRQG (99 aa)). DNA-binding regions (H-T-H motif) lie at residues 191–212 (EAVA…KQHT) and 239–262 (VTEI…RREF).

In terms of assembly, binds DNA as a dimer.

Its subcellular location is the cytoplasm. Functionally, activates expression of the rhaBAD and rhaT operons. The protein is HTH-type transcriptional activator RhaS of Salmonella paratyphi A (strain ATCC 9150 / SARB42).